Consider the following 143-residue polypeptide: Cold shock domain-containing protein CG9705 (143 aa).

The segment at 1–30 is disordered; it reads MTEPRTPEKLLAAKPPVLHHNSHSPNASLQ. Serine 22, serine 24, serine 28, and serine 33 each carry phosphoserine. A CSD domain is found at 54-121; that stretch reads VVTGMVKSFS…KHQAVHVQIS (68 aa). Serine 139 and serine 140 each carry phosphoserine.

This is Cold shock domain-containing protein CG9705 from Drosophila melanogaster (Fruit fly).